The primary structure comprises 115 residues: Large ribosomal subunit protein bL19 (115 aa).

Belongs to the bacterial ribosomal protein bL19 family.

This protein is located at the 30S-50S ribosomal subunit interface and may play a role in the structure and function of the aminoacyl-tRNA binding site. The chain is Large ribosomal subunit protein bL19 from Clostridium tetani (strain Massachusetts / E88).